The following is a 309-amino-acid chain: Taste receptor type 2 member 31 (309 aa).

At 1–2 the chain is on the extracellular side; the sequence is MT. Residues 3–23 traverse the membrane as a helical segment; it reads TFLPIIFSSLVVVIFVIGNFA. The Cytoplasmic segment spans residues 24 to 55; that stretch reads NGFIALVNSIEWFKXQKISFADQILTALAVSR. A helical transmembrane segment spans residues 56–76; sequence VGLLWVLLLNWYSTVLNPAFY. Residues 77–100 are Extracellular-facing; that stretch reads SVEVRTTAYNVWAVTGHFSNWLAT. The chain crosses the membrane as a helical span at residues 101–121; the sequence is SLSIFYLLKIANFSNFIFLHL. At 122–126 the chain is on the cytoplasmic side; it reads KRRVK. A helical membrane pass occupies residues 127-147; sequence SVILVMLLGPLLFLACQLFMI. Over 148 to 181 the chain is Extracellular; sequence NMKEIVRTKEYEGNMTWKIKLRSAVYLSDATVTT. A glycan (N-linked (GlcNAc...) asparagine) is linked at Asn-161. The helical transmembrane segment at 182-202 threads the bilayer; the sequence is LGNLVPFTLTLLCFLLLICSL. Topologically, residues 203-229 are cytoplasmic; sequence CKHLKKMQLHGKGSQDPSTKVHIKVLQ. The helical transmembrane segment at 230–250 threads the bilayer; the sequence is TVISFLLLCAIYFLSIMISVW. The Extracellular segment spans residues 251 to 259; it reads SFGSLKNKP. The helical transmembrane segment at 260-280 threads the bilayer; that stretch reads VFMFCKAIRFSYPSIHPFILI. The Cytoplasmic portion of the chain corresponds to 281 to 309; the sequence is WGNKKLKQTFLSVLRQVRYWVKGEKPSSP.

Belongs to the G-protein coupled receptor T2R family.

Its subcellular location is the membrane. Functionally, receptor that may play a role in the perception of bitterness and is gustducin-linked. May play a role in sensing the chemical composition of the gastrointestinal content. The activity of this receptor may stimulate alpha gustducin, mediate PLC-beta-2 activation and lead to the gating of TRPM5. In Pan paniscus (Pygmy chimpanzee), this protein is Taste receptor type 2 member 31 (TAS2R31).